Reading from the N-terminus, the 183-residue chain is Holliday junction branch migration complex subunit RuvA (183 aa).

The tract at residues 1–64 is domain I; the sequence is MIVAIEGIVS…EDSHKLYGFL (64 aa). Positions 65-138 are domain II; the sequence is DTNEQRMFEL…SDAKINIENS (74 aa). Position 138 (Ser-138) is a region of interest, flexible linker. The interval 138 to 183 is domain III; it reads SNQDHAQALAALLSLGFKQENILKVLRTCESQNTSELIKEALKKLA.

This sequence belongs to the RuvA family. Homotetramer. Forms an RuvA(8)-RuvB(12)-Holliday junction (HJ) complex. HJ DNA is sandwiched between 2 RuvA tetramers; dsDNA enters through RuvA and exits via RuvB. An RuvB hexamer assembles on each DNA strand where it exits the tetramer. Each RuvB hexamer is contacted by two RuvA subunits (via domain III) on 2 adjacent RuvB subunits; this complex drives branch migration. In the full resolvosome a probable DNA-RuvA(4)-RuvB(12)-RuvC(2) complex forms which resolves the HJ.

Its subcellular location is the cytoplasm. Functionally, the RuvA-RuvB-RuvC complex processes Holliday junction (HJ) DNA during genetic recombination and DNA repair, while the RuvA-RuvB complex plays an important role in the rescue of blocked DNA replication forks via replication fork reversal (RFR). RuvA specifically binds to HJ cruciform DNA, conferring on it an open structure. The RuvB hexamer acts as an ATP-dependent pump, pulling dsDNA into and through the RuvAB complex. HJ branch migration allows RuvC to scan DNA until it finds its consensus sequence, where it cleaves and resolves the cruciform DNA. The protein is Holliday junction branch migration complex subunit RuvA of Campylobacter lari (strain RM2100 / D67 / ATCC BAA-1060).